Here is a 257-residue protein sequence, read N- to C-terminus: Ditrans,polycis-undecaprenyl-diphosphate synthase ((2E,6E)-farnesyl-diphosphate specific) (257 aa).

The active site involves Asp24. Asp24 provides a ligand contact to Mg(2+). Substrate is bound by residues 25–28, Trp29, Arg37, His41, and 69–71; these read GNGR and SSE. The active-site Proton acceptor is Asn72. Substrate-binding positions include Trp73, Arg75, Arg192, and 198-200; that span reads RIS. Position 211 (Glu211) interacts with Mg(2+).

Belongs to the UPP synthase family. In terms of assembly, homodimer. The cofactor is Mg(2+).

The catalysed reaction is 8 isopentenyl diphosphate + (2E,6E)-farnesyl diphosphate = di-trans,octa-cis-undecaprenyl diphosphate + 8 diphosphate. Catalyzes the sequential condensation of isopentenyl diphosphate (IPP) with (2E,6E)-farnesyl diphosphate (E,E-FPP) to yield (2Z,6Z,10Z,14Z,18Z,22Z,26Z,30Z,34E,38E)-undecaprenyl diphosphate (di-trans,octa-cis-UPP). UPP is the precursor of glycosyl carrier lipid in the biosynthesis of bacterial cell wall polysaccharide components such as peptidoglycan and lipopolysaccharide. The chain is Ditrans,polycis-undecaprenyl-diphosphate synthase ((2E,6E)-farnesyl-diphosphate specific) from Aliivibrio fischeri (strain ATCC 700601 / ES114) (Vibrio fischeri).